Consider the following 172-residue polypeptide: Small ribosomal subunit protein uS5 (172 aa).

The region spanning Leu17 to Ile80 is the S5 DRBM domain.

Belongs to the universal ribosomal protein uS5 family. As to quaternary structure, part of the 30S ribosomal subunit. Contacts proteins S4 and S8.

Functionally, with S4 and S12 plays an important role in translational accuracy. In terms of biological role, located at the back of the 30S subunit body where it stabilizes the conformation of the head with respect to the body. This is Small ribosomal subunit protein uS5 from Variovorax paradoxus (strain S110).